A 178-amino-acid polypeptide reads, in one-letter code: Caveolin-1 (178 aa).

The residue at position 2 (S2) is an N-acetylserine. S2 is subject to Phosphoserine. The tract at residues 2–94 (SGGKYVDSEG…WKASFTTFTV (93 aa)) is required for homooligomerization. Residues 2-104 (SGGKYVDSEG…TKYWFYRLLS (103 aa)) are Cytoplasmic-facing. Residue K5 is modified to N6-acetyllysine; alternate. A Glycyl lysine isopeptide (Lys-Gly) (interchain with G-Cter in ubiquitin); alternate cross-link involves residue K5. Phosphotyrosine is present on Y6. S9 carries the phosphoserine modification. Position 14 is a phosphotyrosine; by ABL1 (Y14). Y25 carries the phosphotyrosine modification. Residues K26, K30, K39, K47, and K57 each participate in a glycyl lysine isopeptide (Lys-Gly) (interchain with G-Cter in ubiquitin) cross-link. The interval 82 to 94 (DGIWKASFTTFTV) is interaction with CAVIN3. An intramembrane region (helical) is located at residues 105-125 (TLFGIPMALIWGIYFAILSFL). Residues 126–178 (HIWAVVPCIKSFLIEIQCIGRVYSIYIHTFCDPLFEAVGKLFSNIRINMQKEI) are Cytoplasmic-facing. Positions 131 to 142 (VPCIKSFLIEIQ) are interacts with SPRY1, SPRY2, SPRY3 and SPRY4. 3 S-palmitoyl cysteine lipidation sites follow: C133, C143, and C156. An interacts with SPRY1, SPRY2, and SPRY4 region spans residues 149-160 (SIYIHTFCDPLF). An interacts with SPRY1, SPRY2, SPRY3 and SPRY4 region spans residues 167–178 (FSNIRINMQKEI).

This sequence belongs to the caveolin family. Homooligomer. Interacts with GLIPR2. Interacts with NOSTRIN. Interacts with SNAP25 and STX1A. Interacts (via the N-terminus) with DPP4; the interaction is direct. Interacts with CTNNB1, CDH1 and JUP. Interacts with PACSIN2; this interaction induces membrane tubulation. Interacts with SLC7A9. Interacts with BMX and BTK. Interacts with TGFBR1. Interacts with CAVIN3 (via leucine-zipper domain) in a cholesterol-sensitive manner. Interacts with CAVIN1. Interacts with EHD2 in a cholesterol-dependent manner. Forms a ternary complex with UBXN6 and VCP; mediates CAV1 targeting to lysosomes for degradation. Interacts with ABCG1; this interaction regulates ABCG1-mediated cholesterol efflux. Interacts with NEU3; this interaction enhances NEU3 sialidase activity within caveola. Interacts (via C-terminus) with SPRY1, SPRY2 (via C-terminus), SPRY3, and SPRY4. Interacts with IGFBP5; this interaction allows trafficking of IGFBP5 from the plasma membrane to the nucleus. Phosphorylated at Tyr-14 by ABL1 in response to oxidative stress. Post-translationally, ubiquitinated. Undergo monoubiquitination and multi- and/or polyubiquitination. Monoubiquitination of N-terminal lysines promotes integration in a ternary complex with UBXN6 and VCP which promotes oligomeric CAV1 targeting to lysosomes for degradation. Ubiquitinated by ZNRF1; leading to degradation and modulation of the TLR4-mediated immune response.

It is found in the golgi apparatus membrane. Its subcellular location is the cell membrane. The protein resides in the membrane. It localises to the caveola. The protein localises to the membrane raft. Functionally, may act as a scaffolding protein within caveolar membranes. Forms a stable heterooligomeric complex with CAV2 that targets to lipid rafts and drives caveolae formation. Mediates the recruitment of CAVIN proteins (CAVIN1/2/3/4) to the caveolae. Interacts directly with G-protein alpha subunits and can functionally regulate their activity. Involved in the costimulatory signal essential for T-cell receptor (TCR)-mediated T-cell activation. Its binding to DPP4 induces T-cell proliferation and NF-kappa-B activation in a T-cell receptor/CD3-dependent manner. Recruits CTNNB1 to caveolar membranes and may regulate CTNNB1-mediated signaling through the Wnt pathway. Negatively regulates TGFB1-mediated activation of SMAD2/3 by mediating the internalization of TGFBR1 from membrane rafts leading to its subsequent degradation. Binds 20(S)-hydroxycholesterol (20(S)-OHC). The sequence is that of Caveolin-1 (CAV1) from Dasypus novemcinctus (Nine-banded armadillo).